Reading from the N-terminus, the 405-residue chain is Phosphopentomutase (405 aa).

6 residues coordinate Mn(2+): Asp10, Asp297, His302, Asp338, His339, and His350.

The protein belongs to the phosphopentomutase family. It depends on Mn(2+) as a cofactor.

The protein resides in the cytoplasm. The enzyme catalyses 2-deoxy-alpha-D-ribose 1-phosphate = 2-deoxy-D-ribose 5-phosphate. The catalysed reaction is alpha-D-ribose 1-phosphate = D-ribose 5-phosphate. Its pathway is carbohydrate degradation; 2-deoxy-D-ribose 1-phosphate degradation; D-glyceraldehyde 3-phosphate and acetaldehyde from 2-deoxy-alpha-D-ribose 1-phosphate: step 1/2. Functionally, isomerase that catalyzes the conversion of deoxy-ribose 1-phosphate (dRib-1-P) and ribose 1-phosphate (Rib-1-P) to deoxy-ribose 5-phosphate (dRib-5-P) and ribose 5-phosphate (Rib-5-P), respectively. In Pseudoalteromonas translucida (strain TAC 125), this protein is Phosphopentomutase.